A 291-amino-acid chain; its full sequence is Formamidopyrimidine-DNA glycosylase (291 aa).

The Schiff-base intermediate with DNA role is filled by proline 2. Glutamate 3 serves as the catalytic Proton donor. The active-site Proton donor; for beta-elimination activity is lysine 61. DNA-binding residues include histidine 103, arginine 123, and arginine 165. The FPG-type zinc finger occupies 251–285; sequence EVYGRGGQACSRCASTIRRDAFMNRSSFSCPACQP. Catalysis depends on arginine 275, which acts as the Proton donor; for delta-elimination activity.

The protein belongs to the FPG family. In terms of assembly, monomer. Zn(2+) is required as a cofactor.

It carries out the reaction Hydrolysis of DNA containing ring-opened 7-methylguanine residues, releasing 2,6-diamino-4-hydroxy-5-(N-methyl)formamidopyrimidine.. The catalysed reaction is 2'-deoxyribonucleotide-(2'-deoxyribose 5'-phosphate)-2'-deoxyribonucleotide-DNA = a 3'-end 2'-deoxyribonucleotide-(2,3-dehydro-2,3-deoxyribose 5'-phosphate)-DNA + a 5'-end 5'-phospho-2'-deoxyribonucleoside-DNA + H(+). Its function is as follows. Involved in base excision repair of DNA damaged by oxidation or by mutagenic agents. Acts as a DNA glycosylase that recognizes and removes damaged bases. Has a preference for oxidized purines, such as 7,8-dihydro-8-oxoguanine (8-oxoG). Has AP (apurinic/apyrimidinic) lyase activity and introduces nicks in the DNA strand. Cleaves the DNA backbone by beta-delta elimination to generate a single-strand break at the site of the removed base with both 3'- and 5'-phosphates. The sequence is that of Formamidopyrimidine-DNA glycosylase from Parafrankia sp. (strain EAN1pec).